We begin with the raw amino-acid sequence, 488 residues long: Cysteine desulfurase, mitochondrial (488 aa).

Residues 25–52 (LPKPLATSSSPATNAPNKTSNPKTGELH) are disordered. Over residues 30-47 (ATSSSPATNAPNKTSNPK) the composition is skewed to polar residues. Pyridoxal 5'-phosphate-binding positions include 157–158 (AT), asparagine 237, glutamine 265, and 285–287 (SSH). Residue lysine 288 is modified to N6-(pyridoxal phosphate)lysine. Threonine 325 lines the pyridoxal 5'-phosphate pocket. Cysteine 412 acts as the Cysteine persulfide intermediate in catalysis. Cysteine 412 is a binding site for [2Fe-2S] cluster.

It belongs to the class-V pyridoxal-phosphate-dependent aminotransferase family. NifS/IscS subfamily. Requires pyridoxal 5'-phosphate as cofactor.

The protein resides in the mitochondrion. The catalysed reaction is (sulfur carrier)-H + L-cysteine = (sulfur carrier)-SH + L-alanine. Its function is as follows. Catalyzes the removal of elemental sulfur from cysteine to produce alanine. It supplies the inorganic sulfur for iron-sulfur (Fe-S) clusters. Plays a role in both tRNA-processing and mitochondrial metabolism. Involved in the 2-thio-modification of both 5-carboxymethylaminomethyl-2-thiouridine in mitochondrial tRNAs and 5-methoxycarbonylmethyl-2-thiouridine (mcm5s2U) in cytoplasmic tRNAs. In Candida albicans (strain SC5314 / ATCC MYA-2876) (Yeast), this protein is Cysteine desulfurase, mitochondrial (NFS1).